The chain runs to 314 residues: Putative S-adenosyl-L-methionine-dependent methyltransferase MAB_3886c (314 aa).

S-adenosyl-L-methionine contacts are provided by residues Asp133 and 162 to 163 (DL).

Belongs to the UPF0677 family.

Exhibits S-adenosyl-L-methionine-dependent methyltransferase activity. The protein is Putative S-adenosyl-L-methionine-dependent methyltransferase MAB_3886c of Mycobacteroides abscessus (strain ATCC 19977 / DSM 44196 / CCUG 20993 / CIP 104536 / JCM 13569 / NCTC 13031 / TMC 1543 / L948) (Mycobacterium abscessus).